The following is a 571-amino-acid chain: Isocitrate dehydrogenase kinase/phosphatase (571 aa).

ATP-binding positions include 318–324 and lysine 339; that span reads APGVRGM. Residue aspartate 374 is part of the active site.

The protein belongs to the AceK family.

It localises to the cytoplasm. The catalysed reaction is L-seryl-[isocitrate dehydrogenase] + ATP = O-phospho-L-seryl-[isocitrate dehydrogenase] + ADP + H(+). Bifunctional enzyme which can phosphorylate or dephosphorylate isocitrate dehydrogenase (IDH) on a specific serine residue. This is a regulatory mechanism which enables bacteria to bypass the Krebs cycle via the glyoxylate shunt in response to the source of carbon. When bacteria are grown on glucose, IDH is fully active and unphosphorylated, but when grown on acetate or ethanol, the activity of IDH declines drastically concomitant with its phosphorylation. The polypeptide is Isocitrate dehydrogenase kinase/phosphatase (Pseudomonas entomophila (strain L48)).